The following is a 212-amino-acid chain: Fibrillarin-like rRNA/tRNA 2'-O-methyltransferase (212 aa).

S-adenosyl-L-methionine is bound by residues threonine 76–threonine 77, glutamate 94–leucine 95, aspartate 119–alanine 120, and aspartate 139–glutamine 142.

It belongs to the methyltransferase superfamily. Fibrillarin family. Interacts with nop5. Component of box C/D small ribonucleoprotein (sRNP) particles that contain rpl7ae, FlpA and nop5, plus a guide RNA.

In terms of biological role, involved in pre-rRNA and tRNA processing. Utilizes the methyl donor S-adenosyl-L-methionine to catalyze the site-specific 2'-hydroxyl methylation of ribose moieties in rRNA and tRNA. Site specificity is provided by a guide RNA that base pairs with the substrate. Methylation occurs at a characteristic distance from the sequence involved in base pairing with the guide RNA. This is Fibrillarin-like rRNA/tRNA 2'-O-methyltransferase from Picrophilus torridus (strain ATCC 700027 / DSM 9790 / JCM 10055 / NBRC 100828 / KAW 2/3).